Here is a 415-residue protein sequence, read N- to C-terminus: Alpha-1,3/1,6-mannosyltransferase ALG2 (415 aa).

Over 1 to 84 (MAENLYRARS…LPRSLGWGGR (84 aa)) the chain is Cytoplasmic. The segment at residues 85 to 105 (GAAICSYVRMVFLALYVLFLS) is an intramembrane region (helical). Over 106–415 (GEEFDVVVCD…QLYQYVTKLV (310 aa)) the chain is Cytoplasmic.

Belongs to the glycosyltransferase group 1 family. Glycosyltransferase 4 subfamily.

It is found in the endoplasmic reticulum membrane. It catalyses the reaction a beta-D-Man-(1-&gt;4)-beta-D-GlcNAc-(1-&gt;4)-alpha-D-GlcNAc-diphospho-di-trans,poly-cis-dolichol + GDP-alpha-D-mannose = an alpha-D-Man-(1-&gt;3)-beta-D-Man-(1-&gt;4)-beta-D-GlcNAc-(1-&gt;4)-alpha-D-GlcNAc-diphospho-di-trans,poly-cis-dolichol + GDP + H(+). The catalysed reaction is an alpha-D-Man-(1-&gt;3)-beta-D-Man-(1-&gt;4)-beta-D-GlcNAc-(1-&gt;4)-alpha-D-GlcNAc-diphospho-di-trans,poly-cis-dolichol + GDP-alpha-D-mannose = an alpha-D-Man-(1-&gt;3)-[alpha-D-Man-(1-&gt;6)]-beta-D-Man-(1-&gt;4)-beta-D-GlcNAc-(1-&gt;4)-alpha-D-GlcNAc-diphospho-di-trans,poly-cis-dolichol + GDP + H(+). It carries out the reaction a beta-D-Man-(1-&gt;4)-beta-D-GlcNAc-(1-&gt;4)-alpha-D-GlcNAc-diphospho-di-trans,poly-cis-dolichol + GDP-alpha-D-mannose = an alpha-D-Man-(1-&gt;6)-beta-D-Man-(1-&gt;4)-beta-D-GlcNAc-(1-&gt;4)-alpha-D-GlcNAc-diphospho-di-trans,poly-cis-dolichol + GDP + H(+). The enzyme catalyses an alpha-D-Man-(1-&gt;6)-beta-D-Man-(1-&gt;4)-beta-D-GlcNAc-(1-&gt;4)-alpha-D-GlcNAc-diphospho-di-trans,poly-cis-dolichol + GDP-alpha-D-mannose = an alpha-D-Man-(1-&gt;3)-[alpha-D-Man-(1-&gt;6)]-beta-D-Man-(1-&gt;4)-beta-D-GlcNAc-(1-&gt;4)-alpha-D-GlcNAc-diphospho-di-trans,poly-cis-dolichol + GDP + H(+). It participates in protein modification; protein glycosylation. Functionally, mannosyltransferase that operates in the biosynthetic pathway of dolichol-linked oligosaccharides, the glycan precursors employed in protein asparagine (N)-glycosylation. The assembly of dolichol-linked oligosaccharides begins on the cytosolic side of the endoplasmic reticulum membrane and finishes in its lumen. The sequential addition of sugars to dolichol pyrophosphate produces dolichol-linked oligosaccharides containing fourteen sugars, including two GlcNAcs, nine mannoses and three glucoses. Once assembled, the oligosaccharide is transferred from the lipid to nascent proteins by oligosaccharyltransferases. Catalyzes, on the cytoplasmic face of the endoplasmic reticulum, the addition of the second and third mannose residues to the dolichol-linked oligosaccharide chain, to produce Man3GlcNAc(2)-PP-dolichol core oligosaccharide. Man3GlcNAc(2)-PP-dolichol is a substrate for ALG11, the following enzyme in the biosynthetic pathway. While both alpha 1,3 and alpha 1,6 linkages are possible, the sequential addition of alpha 1,3 followed by alpha 1,6 is probably the preferred route. The protein is Alpha-1,3/1,6-mannosyltransferase ALG2 (Alg2) of Mus musculus (Mouse).